The chain runs to 430 residues: Crotonyl-CoA carboxylase/reductase (430 aa).

The protein belongs to the zinc-containing alcohol dehydrogenase family. Crotonyl-CoA carboxylase/reductase subfamily. In terms of assembly, homodimer. Requires Despite some sequence similarity to zinc-containing alcohol dehydrogenases, this enzyme does not bind any metals. as cofactor.

It carries out the reaction (2S)-ethylmalonyl-CoA + NADP(+) = (2E)-butenoyl-CoA + CO2 + NADPH. The catalysed reaction is (S)-methylmalonyl-CoA + NADP(+) = acryloyl-CoA + CO2 + NADPH. The enzyme catalyses butanoyl-CoA + NADP(+) = (2E)-butenoyl-CoA + NADPH + H(+). Its function is as follows. Catalyzes the NADPH-dependent reductive carboxylation of crotonyl-CoA ((2E)-butenoyl-CoA) to (2S)-ethylmalonyl-CoA, in the presence of CO2. This is a key reaction in the ethylmalonyl-CoA pathway for acetyl-CoA assimilation required for R.sphaeroides growth on acetate as sole carbon source. Is also able to accept acryloyl-CoA as an alternative substrate, yielding (2S)-methylmalonyl-CoA. To a lesser extent, when CO2 is absent, the enzyme also catalyzes the reduction of crotonyl-CoA to butanoyl-CoA. The sequence is that of Crotonyl-CoA carboxylase/reductase from Cereibacter sphaeroides (strain ATCC 17023 / DSM 158 / JCM 6121 / CCUG 31486 / LMG 2827 / NBRC 12203 / NCIMB 8253 / ATH 2.4.1.) (Rhodobacter sphaeroides).